We begin with the raw amino-acid sequence, 91 residues long: Defensin-like protein 269 (91 aa).

An N-terminal signal peptide occupies residues 1 to 25 (MAVSKTTMLIVLVAIILSCVSISNA). Intrachain disulfides connect cysteine 41–cysteine 82, cysteine 53–cysteine 72, cysteine 59–cysteine 77, and cysteine 63–cysteine 79.

This sequence belongs to the DEFL family.

The protein localises to the secreted. This is Defensin-like protein 269 from Arabidopsis thaliana (Mouse-ear cress).